The primary structure comprises 227 residues: MAHATQVGLQDATSPIMEELISFHDHALMIIFLISFLVLYALFLTLTTKLTNTNITDAQEMETVWTILPAIILVLIALPSLRILYLTDEINDPSFTIKAIGHQWYWAYEYTDYGGLIFNSYMLPPLFLEPGDLRLLEVDNRVVLPIEAPVRMMITSQDVLHSWTVPSLGLKTDAIPGRLNQTTFTATRPGVYYGQCSEICGANHSFMPIVLELIPLKIFEMGPVFTL.

Residues methionine 1–serine 14 lie on the Mitochondrial intermembrane side of the membrane. A helical membrane pass occupies residues proline 15–threonine 45. The Mitochondrial matrix segment spans residues leucine 46–glutamine 59. The helical transmembrane segment at glutamate 60–threonine 87 threads the bilayer. The Mitochondrial intermembrane portion of the chain corresponds to aspartate 88 to leucine 227. Cu cation is bound by residues histidine 161, cysteine 196, glutamate 198, cysteine 200, histidine 204, and methionine 207. Position 198 (glutamate 198) interacts with Mg(2+).

Belongs to the cytochrome c oxidase subunit 2 family. In terms of assembly, component of the cytochrome c oxidase (complex IV, CIV), a multisubunit enzyme composed of 14 subunits. The complex is composed of a catalytic core of 3 subunits MT-CO1, MT-CO2 and MT-CO3, encoded in the mitochondrial DNA, and 11 supernumerary subunits COX4I, COX5A, COX5B, COX6A, COX6B, COX6C, COX7A, COX7B, COX7C, COX8 and NDUFA4, which are encoded in the nuclear genome. The complex exists as a monomer or a dimer and forms supercomplexes (SCs) in the inner mitochondrial membrane with NADH-ubiquinone oxidoreductase (complex I, CI) and ubiquinol-cytochrome c oxidoreductase (cytochrome b-c1 complex, complex III, CIII), resulting in different assemblies (supercomplex SCI(1)III(2)IV(1) and megacomplex MCI(2)III(2)IV(2)). Found in a complex with TMEM177, COA6, COX18, COX20, SCO1 and SCO2. Interacts with TMEM177 in a COX20-dependent manner. Interacts with COX20. Interacts with COX16. Cu cation serves as cofactor.

The protein localises to the mitochondrion inner membrane. The enzyme catalyses 4 Fe(II)-[cytochrome c] + O2 + 8 H(+)(in) = 4 Fe(III)-[cytochrome c] + 2 H2O + 4 H(+)(out). Component of the cytochrome c oxidase, the last enzyme in the mitochondrial electron transport chain which drives oxidative phosphorylation. The respiratory chain contains 3 multisubunit complexes succinate dehydrogenase (complex II, CII), ubiquinol-cytochrome c oxidoreductase (cytochrome b-c1 complex, complex III, CIII) and cytochrome c oxidase (complex IV, CIV), that cooperate to transfer electrons derived from NADH and succinate to molecular oxygen, creating an electrochemical gradient over the inner membrane that drives transmembrane transport and the ATP synthase. Cytochrome c oxidase is the component of the respiratory chain that catalyzes the reduction of oxygen to water. Electrons originating from reduced cytochrome c in the intermembrane space (IMS) are transferred via the dinuclear copper A center (CU(A)) of subunit 2 and heme A of subunit 1 to the active site in subunit 1, a binuclear center (BNC) formed by heme A3 and copper B (CU(B)). The BNC reduces molecular oxygen to 2 water molecules using 4 electrons from cytochrome c in the IMS and 4 protons from the mitochondrial matrix. The polypeptide is Cytochrome c oxidase subunit 2 (MT-CO2) (Hylobates lar (Lar gibbon)).